Consider the following 184-residue polypeptide: Probable chemoreceptor glutamine deamidase CheD (184 aa).

This sequence belongs to the CheD family.

The catalysed reaction is L-glutaminyl-[protein] + H2O = L-glutamyl-[protein] + NH4(+). Functionally, probably deamidates glutamine residues to glutamate on methyl-accepting chemotaxis receptors (MCPs), playing an important role in chemotaxis. This chain is Probable chemoreceptor glutamine deamidase CheD, found in Rhizobium johnstonii (strain DSM 114642 / LMG 32736 / 3841) (Rhizobium leguminosarum bv. viciae).